The primary structure comprises 133 residues: Small ribosomal subunit protein uS11 (133 aa).

It belongs to the universal ribosomal protein uS11 family. Part of the 30S ribosomal subunit. Interacts with proteins S7 and S18. Binds to IF-3.

Functionally, located on the platform of the 30S subunit, it bridges several disparate RNA helices of the 16S rRNA. Forms part of the Shine-Dalgarno cleft in the 70S ribosome. The chain is Small ribosomal subunit protein uS11 from Bordetella petrii (strain ATCC BAA-461 / DSM 12804 / CCUG 43448).